Here is a 188-residue protein sequence, read N- to C-terminus: MKRGLFVGRFQPVHKGHIKALEFVFDQVDEVIIGIGSAQASHTLKNPFTTGERMEMLIRALDESGLSKKKRYYLIPLPDINFNAIWVPYVESMVPKFEVVFTGNSLVAQLFRERGYKVVVQPMFKKDILSATEIRRRMIEGEPWEDLVPKSVAEYIKEIRGVERIRMLATNLESSEKELQAPIRIPEY.

It belongs to the archaeal NMN adenylyltransferase family.

It is found in the cytoplasm. The catalysed reaction is beta-nicotinamide D-ribonucleotide + ATP + H(+) = diphosphate + NAD(+). It participates in cofactor biosynthesis; NAD(+) biosynthesis; NAD(+) from nicotinamide D-ribonucleotide: step 1/1. The chain is Nicotinamide-nucleotide adenylyltransferase from Pyrococcus furiosus (strain ATCC 43587 / DSM 3638 / JCM 8422 / Vc1).